A 494-amino-acid polypeptide reads, in one-letter code: Probable cytosol aminopeptidase (494 aa).

The Mn(2+) site is built by K260 and D265. K272 is an active-site residue. D283, D342, and E344 together coordinate Mn(2+). R346 is a catalytic residue.

It belongs to the peptidase M17 family. Mn(2+) is required as a cofactor.

It localises to the cytoplasm. It catalyses the reaction Release of an N-terminal amino acid, Xaa-|-Yaa-, in which Xaa is preferably Leu, but may be other amino acids including Pro although not Arg or Lys, and Yaa may be Pro. Amino acid amides and methyl esters are also readily hydrolyzed, but rates on arylamides are exceedingly low.. It carries out the reaction Release of an N-terminal amino acid, preferentially leucine, but not glutamic or aspartic acids.. Functionally, presumably involved in the processing and regular turnover of intracellular proteins. Catalyzes the removal of unsubstituted N-terminal amino acids from various peptides. The chain is Probable cytosol aminopeptidase from Bacillus cereus (strain B4264).